We begin with the raw amino-acid sequence, 577 residues long: Arginine--tRNA ligase (577 aa).

Residues 122-132 carry the 'HIGH' region motif; sequence PNVAKEMHVGH.

The protein belongs to the class-I aminoacyl-tRNA synthetase family. As to quaternary structure, monomer.

It localises to the cytoplasm. The catalysed reaction is tRNA(Arg) + L-arginine + ATP = L-arginyl-tRNA(Arg) + AMP + diphosphate. The sequence is that of Arginine--tRNA ligase from Haemophilus influenzae (strain PittEE).